The chain runs to 816 residues: Acyl-homoserine lactone acylase QuiP (816 aa).

An N-terminal signal peptide occupies residues 1-33; that stretch reads MASPALSHFLPRFGVAAAVAGVLSLTGCQTWNA. Residue S262 is the Nucleophile of the active site.

Belongs to the peptidase S45 family. Heterodimer of an alpha subunit and a beta subunit processed from the same precursor.

Its subcellular location is the periplasm. It carries out the reaction an N-acyl-L-homoserine lactone + H2O = L-homoserine lactone + a carboxylate. Catalyzes the deacylation of acyl-homoserine lactone (AHL or acyl-HSL), releasing homoserine lactone (HSL) and the corresponding fatty acid. Possesses a specificity for the degradation of long-chain acyl-HSLs (side chains of seven or more carbons in length). In Pseudomonas fluorescens (strain Pf0-1), this protein is Acyl-homoserine lactone acylase QuiP (quiP).